The following is a 98-amino-acid chain: MTLFSSISSISNPMTSSKSSISSFGSGTSIGSNSIACGGCGGGSGGILGSGLGIGLGLGLDLTGGSRTRGSCRGNGGSSNPVNGHGGMGGGNGSCCGI.

2 disordered regions span residues 1–26 (MTLFSSISSISNPMTSSKSSISSFGS) and 68–98 (TRGSCRGNGGSSNPVNGHGGMGGGNGSCCGI). Residues 84-98 (GHGGMGGGNGSCCGI) are compositionally biased toward gly residues.

This sequence belongs to the hssA/B family.

In Dictyostelium discoideum (Social amoeba), this protein is HssA/B-like protein 50 (hssl50).